A 977-amino-acid chain; its full sequence is Receptor protein-tyrosine kinase CEPR2 (977 aa).

A signal peptide spans 1 to 31 (MSRRPDLLRGSVVATVAATFLLFIFPPNVES). At 32-620 (TVEKQALFRF…NVKRNSSLDG (589 aa)) the chain is on the extracellular side. Residue Asn-85 is glycosylated (N-linked (GlcNAc...) asparagine). 20 LRR repeats span residues 97–121 (LTKL…IVNC), 122–146 (KNLK…PLKS), 148–167 (EILD…WIGN), 168–192 (MNQL…SIGG), 193–217 (LKKL…IFDL), 219–241 (ALDT…ISRL), 242–265 (VNLT…IKNL), 266–288 (TRLR…ELGV), 290–312 (KELR…GFGD), 313–338 (LSHL…GRFS), 340–361 (LDTV…LCQN), 363–385 (KLQF…YGEC), 386–409 (KSLL…FWSL), 411–433 (LAKM…IGLS), 434–457 (TELS…LGRL), 458–481 (TNIE…VGDL), 482–504 (KELS…ELKN), 506–529 (VKLV…LSQI), 530–553 (ASLN…LVKL), and 555–576 (LSFI…LLAV). Asn-128 carries N-linked (GlcNAc...) asparagine glycosylation. An N-linked (GlcNAc...) asparagine glycan is attached at Asn-205. 3 N-linked (GlcNAc...) asparagine glycosylation sites follow: Asn-243, Asn-251, and Asn-264. Residues Asn-301 and Asn-325 are each glycosylated (N-linked (GlcNAc...) asparagine). N-linked (GlcNAc...) asparagine glycosylation is found at Asn-469 and Asn-491. N-linked (GlcNAc...) asparagine glycosylation is present at Asn-615. Residues 621 to 641 (TLLFLALAIVVVVLVSGLFAL) traverse the membrane as a helical segment. At 642–977 (RYRVVKIREL…SQDTTGKITV (336 aa)) the chain is on the cytoplasmic side. The Protein kinase domain occupies 683-965 (LDEDHVIGSG…RKLDDADPCV (283 aa)). Residues 689-697 (IGSGSAGKV) and Lys-712 each bind ATP. Tyr-801 is subject to Phosphotyrosine. Asp-814 (proton acceptor) is an active-site residue. Position 846 is a phosphoserine (Ser-846). Residues Tyr-854 and Tyr-861 each carry the phosphotyrosine modification.

This sequence belongs to the protein kinase superfamily. Ser/Thr protein kinase family. In terms of assembly, interacts with the root-derived peptide CEP1. Binds to the ammonium transporter AMT1-1. As to expression, expressed in mature leaves, primary roots, and the root tips of both primary and lateral roots.

Its subcellular location is the cell membrane. The catalysed reaction is L-tyrosyl-[protein] + ATP = O-phospho-L-tyrosyl-[protein] + ADP + H(+). Its function is as follows. Receptor kinase involved in the perception of C-terminally encoded plant signaling peptide (CEP) and subsequent regulation of root and shoot development. Together with CEPR1, mediates systemic nitrogen (N)-demand signaling upon the perception of root-derived peptides (e.g. CEP1) via the up-regulation of genes involved in N uptake and assimilation pathways. This chain is Receptor protein-tyrosine kinase CEPR2, found in Arabidopsis thaliana (Mouse-ear cress).